Consider the following 495-residue polypeptide: Cysteine--tRNA ligase (495 aa).

Residue cysteine 35 coordinates Zn(2+). Residues 37 to 47 (PTVYSNVHLGN) carry the 'HIGH' region motif. 3 residues coordinate Zn(2+): cysteine 230, histidine 255, and glutamate 259. The 'KMSKS' region motif lies at 287-291 (KMSKS). Lysine 290 is a binding site for ATP.

Belongs to the class-I aminoacyl-tRNA synthetase family. In terms of assembly, monomer. Requires Zn(2+) as cofactor.

The protein localises to the cytoplasm. It carries out the reaction tRNA(Cys) + L-cysteine + ATP = L-cysteinyl-tRNA(Cys) + AMP + diphosphate. The sequence is that of Cysteine--tRNA ligase from Flavobacterium psychrophilum (strain ATCC 49511 / DSM 21280 / CIP 103535 / JIP02/86).